The primary structure comprises 303 residues: Signal recognition particle receptor FtsY (303 aa).

Residues 108-115 (GVNGVGKT), 190-194 (DTAGR), and 254-257 (TKLD) each bind GTP.

It belongs to the GTP-binding SRP family. FtsY subfamily. Part of the signal recognition particle protein translocation system, which is composed of SRP and FtsY. SRP is a ribonucleoprotein composed of Ffh and a 4.5S RNA molecule.

The protein localises to the cell inner membrane. Its subcellular location is the cytoplasm. The catalysed reaction is GTP + H2O = GDP + phosphate + H(+). Its function is as follows. Involved in targeting and insertion of nascent membrane proteins into the cytoplasmic membrane. Acts as a receptor for the complex formed by the signal recognition particle (SRP) and the ribosome-nascent chain (RNC). Interaction with SRP-RNC leads to the transfer of the RNC complex to the Sec translocase for insertion into the membrane, the hydrolysis of GTP by both Ffh and FtsY, and the dissociation of the SRP-FtsY complex into the individual components. The polypeptide is Signal recognition particle receptor FtsY (Rickettsia typhi (strain ATCC VR-144 / Wilmington)).